The following is a 378-amino-acid chain: Ribosomal RNA large subunit methyltransferase G (378 aa).

It belongs to the methyltransferase superfamily. RlmG family.

Its subcellular location is the cytoplasm. The enzyme catalyses guanosine(1835) in 23S rRNA + S-adenosyl-L-methionine = N(2)-methylguanosine(1835) in 23S rRNA + S-adenosyl-L-homocysteine + H(+). Its function is as follows. Specifically methylates the guanine in position 1835 (m2G1835) of 23S rRNA. The polypeptide is Ribosomal RNA large subunit methyltransferase G (Escherichia coli O9:H4 (strain HS)).